We begin with the raw amino-acid sequence, 130 residues long: Early 3 receptor internalization and degradation beta protein (130 aa).

The N-terminal stretch at 1-19 is a signal peptide; that stretch reads MKRSVIFVLLIFCALPVLC. Residues 53–77 traverse the membrane as a helical segment; the sequence is AWLYAIISVMVFCSTIFALAIYPYL. Residues 122–125 form a tyrosine-based sorting motif region; that stretch reads YFNL.

Belongs to the adenoviridae E3_RID-beta family. As to quaternary structure, interacts with E3 RID-alpha and E3 CR1-alpha. Phosphorylated on serine. In terms of processing, O-glycosylated, but not N-glycosylated.

It localises to the host membrane. Its function is as follows. Prevents infected cell apoptosis induced by the host immune system. Acts by down-regulating a number of cell surface receptors in the tumor necrosis factor (TNF) receptor superfamily, namely FAS, TNFRSF10A/TRAIL receptor 1, and TNFRSF10B/TRAIL receptor 2. Down-regulation of these death receptors protects adenovirus-infected cells from apoptosis induced by the death receptor ligands Fas ligand and TRAIL. RID complex also down-regulates certain tyrosine kinase cell surface receptors, especially the epidermal growth factor receptor (EGFR). RID-mediated Fas and EGFR down-regulation occurs via endocytosis of the receptors into endosomes followed by transport to and degradation within lysosomes. This is Early 3 receptor internalization and degradation beta protein from Human adenovirus C serotype 2 (HAdV-2).